The following is a 220-amino-acid chain: Fructose-6-phosphate aldolase 1 (220 aa).

Catalysis depends on Lys85, which acts as the Schiff-base intermediate with substrate.

The protein belongs to the transaldolase family. Type 3A subfamily. As to quaternary structure, homodecamer.

The protein resides in the cytoplasm. It catalyses the reaction beta-D-fructose 6-phosphate = dihydroxyacetone + D-glyceraldehyde 3-phosphate. In terms of biological role, catalyzes the reversible formation of fructose 6-phosphate from dihydroxyacetone and D-glyceraldehyde 3-phosphate via an aldolization reaction. This is Fructose-6-phosphate aldolase 1 (fsaA) from Escherichia coli O6:H1 (strain CFT073 / ATCC 700928 / UPEC).